The sequence spans 339 residues: UDP-N-acetylenolpyruvoylglucosamine reductase (339 aa).

The 172-residue stretch at 18–189 folds into the FAD-binding PCMH-type domain; that stretch reads GIDVRARLLA…LRVRLRLTRR (172 aa). Residue Arg166 is part of the active site. Ser239 functions as the Proton donor in the catalytic mechanism. Glu335 is a catalytic residue.

It belongs to the MurB family. The cofactor is FAD.

The protein resides in the cytoplasm. It carries out the reaction UDP-N-acetyl-alpha-D-muramate + NADP(+) = UDP-N-acetyl-3-O-(1-carboxyvinyl)-alpha-D-glucosamine + NADPH + H(+). It functions in the pathway cell wall biogenesis; peptidoglycan biosynthesis. Its function is as follows. Cell wall formation. This Pseudomonas aeruginosa (strain ATCC 15692 / DSM 22644 / CIP 104116 / JCM 14847 / LMG 12228 / 1C / PRS 101 / PAO1) protein is UDP-N-acetylenolpyruvoylglucosamine reductase.